A 554-amino-acid polypeptide reads, in one-letter code: Methyl-coenzyme M reductase II subunit alpha (554 aa).

Q151 contacts coenzyme F430. Residues R229, 260-261, and R274 each bind coenzyme B; that span reads KH. Y336 and Y447 together coordinate coenzyme M.

Belongs to the methyl-coenzyme M reductase alpha subunit family. MCR is a hexamer of two alpha, two beta, and two gamma chains, forming a dimer of heterotrimers. The cofactor is coenzyme F430.

It catalyses the reaction coenzyme B + methyl-coenzyme M = methane + coenzyme M-coenzyme B heterodisulfide. Its pathway is one-carbon metabolism; methyl-coenzyme M reduction; methane from methyl-coenzyme M: step 1/1. Its function is as follows. Component of the methyl-coenzyme M reductase (MCR) I that catalyzes the reductive cleavage of methyl-coenzyme M (CoM-S-CH3 or 2-(methylthio)ethanesulfonate) using coenzyme B (CoB or 7-mercaptoheptanoylthreonine phosphate) as reductant which results in the production of methane and the mixed heterodisulfide of CoB and CoM (CoM-S-S-CoB). This is the final step in methanogenesis. The sequence is that of Methyl-coenzyme M reductase II subunit alpha (mrtA) from Methanothermus fervidus (strain ATCC 43054 / DSM 2088 / JCM 10308 / V24 S).